Reading from the N-terminus, the 301-residue chain is Ubiquitin thioesterase OTU1 (301 aa).

The UBX-like stretch occupies residues K4–S80. One can recognise an OTU domain in the interval L109–N229. The segment at V114–C120 is cys-loop. The active site involves D117. The Nucleophile role is filled by C120. K160 is covalently cross-linked (Glycyl lysine isopeptide (Lys-Gly) (interchain with G-Cter in ubiquitin)). The tract at residues I169 to I179 is variable-loop. Positions F218–H222 are his-loop. I221 serves as a coordination point for substrate. H222 is a catalytic residue. Positions D243 to A248 are S2 site. A C2H2-type zinc finger spans residues I270 to H294. The active site involves H294.

Forms a complex composed of CDC48, NPL4, UFD1, DOA1, SHP1 and deubiquitinase OTU1; within the complex interacts with CDC48 and DOA1/UFD3.

The protein resides in the cytoplasm. The protein localises to the nucleus. The catalysed reaction is Thiol-dependent hydrolysis of ester, thioester, amide, peptide and isopeptide bonds formed by the C-terminal Gly of ubiquitin (a 76-residue protein attached to proteins as an intracellular targeting signal).. Hydrolase that can remove conjugated ubiquitin from proteins and may therefore play an important regulatory role at the level of protein turnover by preventing degradation. Participates in the regulation of the ubiquitin conjugation pathway involving CDC48 by hindering multiubiquitination of substrates at the CDC48 chaperone. May be indirectly involved in PIS1 gene expression. This Saccharomyces cerevisiae (strain ATCC 204508 / S288c) (Baker's yeast) protein is Ubiquitin thioesterase OTU1 (OTU1).